Consider the following 332-residue polypeptide: Phosphate acyltransferase (332 aa).

The protein belongs to the PlsX family. Homodimer. Probably interacts with PlsY.

The protein resides in the cytoplasm. It carries out the reaction a fatty acyl-[ACP] + phosphate = an acyl phosphate + holo-[ACP]. The protein operates within lipid metabolism; phospholipid metabolism. Its function is as follows. Catalyzes the reversible formation of acyl-phosphate (acyl-PO(4)) from acyl-[acyl-carrier-protein] (acyl-ACP). This enzyme utilizes acyl-ACP as fatty acyl donor, but not acyl-CoA. This chain is Phosphate acyltransferase, found in Clostridium novyi (strain NT).